The chain runs to 293 residues: Actin-related protein 2/3 complex subunit 2 (293 aa).

This sequence belongs to the ARPC2 family. Component of the Arp2/3 complex composed of arpB/Arp2, arpC/Arp3, arcA/p41-arc, arcB/p34-arc, arcC/p21-arc, arcD/p20-arc and arcE/p16-arc. Interacts with carmil (via the region between the LRR domain and COOH-terminal proline-rich domain); carmil is required for Arp2/3-dependent actin nucleation. Arp2/3 complex, MyoB, MyoC, and the alpha and beta subunits of capping protein all form a larger complex with carmil.

The protein localises to the cytoplasm. Its subcellular location is the cytoskeleton. The protein resides in the cell projection. It localises to the cytosol. It is found in the cell cortex. The protein localises to the pseudopodium. Functionally, functions as a component of the Arp2/3 complex which is involved in regulation of actin polymerization and together with an activating nucleation-promoting factor (NPF) mediates the formation of branched actin networks. Seems to contact the pointed end of the daughter actin filament. The Arp2/3 complex is involved in organizing the actin system in cell motility and chemotaxis, in phagocytosis and macropinocytosis, at late steps of endosome processing, and in mitosis. In concert with a group of other proteins, the Arp2/3 complex plays a general role in the rapid activation and adaptation of the actin system to its multiple functions. The protein is Actin-related protein 2/3 complex subunit 2 (arcB) of Dictyostelium discoideum (Social amoeba).